The sequence spans 379 residues: Homoserine O-acetyltransferase (379 aa).

In terms of domain architecture, AB hydrolase-1 spans 52-356; it reads NVVVVLHALT…VYGHDGFLVE (305 aa). Serine 157 (nucleophile) is an active-site residue. Position 227 (arginine 227) interacts with substrate. Catalysis depends on residues aspartate 320 and histidine 350. Aspartate 351 contributes to the substrate binding site.

This sequence belongs to the AB hydrolase superfamily. MetX family. As to quaternary structure, homodimer.

The protein resides in the cytoplasm. It carries out the reaction L-homoserine + acetyl-CoA = O-acetyl-L-homoserine + CoA. It functions in the pathway amino-acid biosynthesis; L-methionine biosynthesis via de novo pathway; O-acetyl-L-homoserine from L-homoserine: step 1/1. Transfers an acetyl group from acetyl-CoA to L-homoserine, forming acetyl-L-homoserine. The protein is Homoserine O-acetyltransferase of Mycobacterium bovis (strain ATCC BAA-935 / AF2122/97).